Here is a 647-residue protein sequence, read N- to C-terminus: Zinc finger CCCH domain-containing protein 19 (647 aa).

2 C3H1-type zinc fingers span residues 16-45 and 47-73; these read RRRS…HSDA and RMNP…HPPL. Positions 78–106 are disordered; sequence GAPTTPRTSQQSAPQVSVPAQAPVPNPAS. Over residues 86 to 106 the composition is skewed to low complexity; that stretch reads SQQSAPQVSVPAQAPVPNPAS. The C3H1-type 3 zinc finger occupies 109–136; the sequence is AKQGVPCYYFQKGMCVKGDRCAFLHLPQ. Disordered stretches follow at residues 155 to 280, 308 to 327, 335 to 452, 512 to 580, and 586 to 605; these read VPHP…RTNG, LSES…DSSD, QRRL…DAES, LKRK…LSPA, and EAAD…ETAE. 2 stretches are compositionally biased toward polar residues: residues 160 to 175 and 189 to 203; these read LKNS…QQNA and NGKT…NRAG. Basic and acidic residues predominate over residues 267–280; that stretch reads SLREDRGAYRRTNG. Basic and acidic residues predominate over residues 347-359; sequence SDRHNVYPEDERH. A compositionally biased stretch (polar residues) spans 369–379; sequence QASNDGVSSSR. The segment covering 419–433 has biased composition (basic and acidic residues); it reads LRGKLHDRLKAKPNE. The span at 435-445 shows a compositional bias: polar residues; that stretch reads VSGNVQSSLSK. The segment covering 527-536 has biased composition (basic and acidic residues); the sequence is GSKREEHSGG.

The polypeptide is Zinc finger CCCH domain-containing protein 19 (Oryza sativa subsp. japonica (Rice)).